The chain runs to 38 residues: Large ribosomal subunit protein bL36 (38 aa).

It belongs to the bacterial ribosomal protein bL36 family.

The protein is Large ribosomal subunit protein bL36 of Karelsulcia muelleri (strain GWSS) (Sulcia muelleri).